A 180-amino-acid chain; its full sequence is Hypoxanthine-guanine phosphoribosyltransferase (180 aa).

Positions 43 and 44 each coordinate diphosphate. Residues Glu-99 and Asp-100 each coordinate Mg(2+). Asp-103 serves as the catalytic Proton acceptor. Residues Lys-131, 152-153 (FI), and Asp-159 contribute to the GMP site. A diphosphate-binding site is contributed by Arg-165.

Belongs to the purine/pyrimidine phosphoribosyltransferase family. Mg(2+) serves as cofactor.

The protein localises to the cytoplasm. It catalyses the reaction IMP + diphosphate = hypoxanthine + 5-phospho-alpha-D-ribose 1-diphosphate. The catalysed reaction is GMP + diphosphate = guanine + 5-phospho-alpha-D-ribose 1-diphosphate. It functions in the pathway purine metabolism; IMP biosynthesis via salvage pathway; IMP from hypoxanthine: step 1/1. It participates in purine metabolism; GMP biosynthesis via salvage pathway; GMP from guanine: step 1/1. Purine salvage pathway enzyme that catalyzes the transfer of the ribosyl-5-phosphate group from 5-phospho-alpha-D-ribose 1-diphosphate (PRPP) to the N9 position of the 6-oxopurines hypoxanthine and guanine to form the corresponding ribonucleotides IMP (inosine 5'-monophosphate) and GMP (guanosine 5'-monophosphate), with the release of PPi. The chain is Hypoxanthine-guanine phosphoribosyltransferase (hpt) from Streptococcus mutans serotype c (strain ATCC 700610 / UA159).